Reading from the N-terminus, the 244-residue chain is 1-(5-phosphoribosyl)-5-[(5-phosphoribosylamino)methylideneamino] imidazole-4-carboxamide isomerase (244 aa).

The active-site Proton acceptor is Asp10. Asp132 (proton donor) is an active-site residue.

Belongs to the HisA/HisF family.

The protein localises to the cytoplasm. It catalyses the reaction 1-(5-phospho-beta-D-ribosyl)-5-[(5-phospho-beta-D-ribosylamino)methylideneamino]imidazole-4-carboxamide = 5-[(5-phospho-1-deoxy-D-ribulos-1-ylimino)methylamino]-1-(5-phospho-beta-D-ribosyl)imidazole-4-carboxamide. The protein operates within amino-acid biosynthesis; L-histidine biosynthesis; L-histidine from 5-phospho-alpha-D-ribose 1-diphosphate: step 4/9. This is 1-(5-phosphoribosyl)-5-[(5-phosphoribosylamino)methylideneamino] imidazole-4-carboxamide isomerase from Xanthomonas oryzae pv. oryzae (strain MAFF 311018).